The primary structure comprises 206 residues: Ras-related protein RABG3d (206 aa).

Residue 15 to 22 participates in GTP binding; that stretch reads GDSGVGKT. Positions 37–45 match the Effector region motif; that stretch reads YKATIGADF. GTP contacts are provided by residues 63–67, 125–128, and 158–159; these read DTAGQ, NKTD, and SA. 2 S-geranylgeranyl cysteine lipidation sites follow: Cys-204 and Cys-206. Cys-206 carries the post-translational modification Cysteine methyl ester.

Belongs to the small GTPase superfamily. Rab family.

It is found in the cell membrane. In terms of biological role, intracellular vesicle trafficking and protein transport. The protein is Ras-related protein RABG3d (RABG3D) of Arabidopsis thaliana (Mouse-ear cress).